Consider the following 486-residue polypeptide: Ty transcription activator TEC1 (486 aa).

Residue S2 is modified to N-acetylserine. Residues 125 to 199 constitute a DNA-binding region (TEA); the sequence is WTIGCDKWSE…QVWKKTIQNK (75 aa). Phosphoserine is present on S325. 2 disordered regions span residues 372–410 and 465–486; these read EHES…SRPV and HYEH…GNFY. The span at 377–388 shows a compositional bias: low complexity; sequence PEFSSNSNSGSE. Residues 472–486 are compositionally biased toward polar residues; the sequence is QRNFTPSNQSHGNFY.

The protein belongs to the TEC1 family.

The protein resides in the nucleus. In terms of biological role, TEC1 is involved in the activation of TY1 and TY1-mediated gene expression. It is not involved in mating or sporulation processes. In Saccharomyces cerevisiae (strain ATCC 204508 / S288c) (Baker's yeast), this protein is Ty transcription activator TEC1 (TEC1).